Reading from the N-terminus, the 328-residue chain is Carbonic anhydrase-related protein 11 (328 aa).

Residues 1-23 (MGAAARLSAPRALVLWAALGAAA) form the signal peptide. The Alpha-carbonic anhydrase domain occupies 33–303 (DWWSYKDNLQ…LAHRALRGNR (271 aa)). N-linked (GlcNAc...) asparagine glycosylation is found at N118, N170, and N260. The segment at 299-328 (LRGNRDPRHPERRCRGPNYRLHVDGVPHGR) is disordered. Over residues 319–328 (LHVDGVPHGR) the composition is skewed to basic and acidic residues.

It belongs to the alpha-carbonic anhydrase family. Expressed abundantly in the brain with moderate expression also present in spinal cord and thyroid.

It is found in the secreted. In terms of biological role, does not have a catalytic activity. This Homo sapiens (Human) protein is Carbonic anhydrase-related protein 11 (CA11).